Reading from the N-terminus, the 514-residue chain is MGCDGRVSGLLRRNLQPTLTYWSVFFSFGLCIAFLGPTLLDLRCQTHSSLPQISWVFLSQQLCLLLGSALGGVFKRTLAQSLWALFTSSLAISLVFAVIPFCRDVKVLALVMALAGLAMGCIDTVANMQLVRMYQKDSAVFLQVLHFFVGFGALLSPLIADPFLSEANCLPANSTANTTSRGHLFHVSRVLGQHHVDAKPWSNQTLPGLTPKDGSGTRVSYAFWIMALINLPVPMAVLMLLSKERLPTCCPQRRPLLLSADELALETQPPEKEDASSLPPKFQSHPGHEDLFSCCQRKNLRGAPYSFFAIHITAALVLFMTDGLTGAYSAFVYSYAVEKPLSVGHKVAGYLPSLFWGFITLGRLLSIPISSRMKPATMVFINVVGVVVTFLVLLIFSYNVVFLFVGTASLGLFLSSTFPSMLAYTEDSLQYKGCATTVLVTGAGVGEMVLQMLVGSIFQAQGSYSFLVCGVIFGCLAFTFYILLLFFHRMHPGLPSVPTQDRSIGMENSESYQR.

Transmembrane regions (helical) follow at residues 19-39 (LTYW…GPTL), 53-73 (ISWV…LGGV), 82-102 (LWAL…IPFC), 107-127 (VLAL…TVAN), and 139-159 (AVFL…SPLI). N-linked (GlcNAc...) asparagine glycosylation is found at Asn177 and Asn203. A run of 7 helical transmembrane segments spans residues 221-241 (YAFW…LMLL), 307-327 (FFAI…LTGA), 347-367 (VAGY…LLSI), 376-396 (ATMV…LLIF), 400-420 (VVFL…TFPS), 438-458 (VLVT…GSIF), and 466-486 (FLVC…LLLF).

This sequence belongs to the major facilitator superfamily.

Its subcellular location is the membrane. In Pongo abelii (Sumatran orangutan), this protein is Major facilitator superfamily domain-containing protein 4A (MFSD4A).